A 76-amino-acid chain; its full sequence is Spore germination protein-like protein YdzR (76 aa).

It belongs to the GerPA/GerPF family.

This is Spore germination protein-like protein YdzR (ydzR) from Bacillus subtilis (strain 168).